The sequence spans 206 residues: MSRTLVLVRHGQSEWNLKNLFTGWRDPGLTEQGHAEAKAAGQRLKAAGLKFDIAYTSALSRAQVTCQHILDELGQPGLETIRDQALNERDYGDLSGLNKDDARAKWGEEQVHIWRRSYDVPPPGGESLKDTGARVWPYYLHTIQPHVLREETVLVAAHGNSLRTLIMALDGLTPEQILKQELNTGVPIIYRLNADSTVASKEILSA.

Substrate is bound by residues 9–16, 22–23, R61, 88–91, K99, 115–116, and 159–160; these read RHGQSEWN, TG, ERDY, RR, and GN. Catalysis depends on H10, which acts as the Tele-phosphohistidine intermediate. E88 serves as the catalytic Proton donor/acceptor.

It belongs to the phosphoglycerate mutase family. BPG-dependent PGAM subfamily. Homodimer.

It carries out the reaction (2R)-2-phosphoglycerate = (2R)-3-phosphoglycerate. The protein operates within carbohydrate degradation; glycolysis; pyruvate from D-glyceraldehyde 3-phosphate: step 3/5. In terms of biological role, catalyzes the interconversion of 2-phosphoglycerate and 3-phosphoglycerate. The chain is 2,3-bisphosphoglycerate-dependent phosphoglycerate mutase from Brucella ovis (strain ATCC 25840 / 63/290 / NCTC 10512).